The chain runs to 141 residues: Large ribosomal subunit protein uL16 (141 aa).

Residues 1–20 are disordered; it reads MLMPKRTKYRKQMKGRNRGK.

It belongs to the universal ribosomal protein uL16 family. As to quaternary structure, part of the 50S ribosomal subunit.

Its function is as follows. Binds 23S rRNA and is also seen to make contacts with the A and possibly P site tRNAs. The chain is Large ribosomal subunit protein uL16 from Helicobacter hepaticus (strain ATCC 51449 / 3B1).